The sequence spans 375 residues: Methylthioribose-1-phosphate isomerase (375 aa).

Catalysis depends on Asp-257, which acts as the Proton donor.

Belongs to the eIF-2B alpha/beta/delta subunits family. MtnA subfamily.

It is found in the cytoplasm. The protein localises to the nucleus. The enzyme catalyses 5-(methylsulfanyl)-alpha-D-ribose 1-phosphate = 5-(methylsulfanyl)-D-ribulose 1-phosphate. The protein operates within amino-acid biosynthesis; L-methionine biosynthesis via salvage pathway; L-methionine from S-methyl-5-thio-alpha-D-ribose 1-phosphate: step 1/6. Its function is as follows. Catalyzes the interconversion of methylthioribose-1-phosphate (MTR-1-P) into methylthioribulose-1-phosphate (MTRu-1-P). The chain is Methylthioribose-1-phosphate isomerase from Leishmania infantum.